The following is a 781-amino-acid chain: Dynamin-related protein dnm1 (781 aa).

A Dynamin-type G domain is found at 23–328 (FLDLPSIVVV…LVSHIRERLP (306 aa)). A G1 motif region spans residues 33–40 (GSQSCGKS). 33-40 (GSQSCGKS) contributes to the GTP binding site. The interval 59 to 61 (VTR) is G2 motif. Positions 76-103 (KNNHDEESTSDNNSEETSAAGETGSLEG) are disordered. The segment at 170–173 (DLPG) is G3 motif. GTP-binding positions include 170–174 (DLPGL) and 239–242 (TKLD). The G4 motif stretch occupies residues 239–242 (TKLD). Residues 269–272 (VNRS) form a G5 motif region. The GED domain occupies 694 to 781 (VDLIKELITS…QANKIISTVF (88 aa)).

It belongs to the TRAFAC class dynamin-like GTPase superfamily. Dynamin/Fzo/YdjA family.

Its subcellular location is the cytoplasm. It is found in the mitochondrion outer membrane. The catalysed reaction is GTP + H2O = GDP + phosphate + H(+). Microtubule-associated force-producing protein that mediates mitochondrial fission during interphasic growth and at cell division. Fission of mitochondria occurs in many cell types and constitutes an important step in mitochondria morphology, which is balanced between fusion and fission. With vps1, acts redundantly in peroxisome biogenesis, which is under cell cycle control. This Schizosaccharomyces pombe (strain 972 / ATCC 24843) (Fission yeast) protein is Dynamin-related protein dnm1 (dnm1).